A 686-amino-acid polypeptide reads, in one-letter code: NADH-ubiquinone oxidoreductase chain 5 (686 aa).

17 consecutive transmembrane segments (helical) span residues 3–23 (LIILFLPFVGAFISGFLGRFV), 40–60 (ALLSLYYWLSINELIIGLFSF), 101–121 (ITLPFLFTVLFISFLIHLFSV), 139–159 (LFTFFMAILVTGANYFVLFVG), 160–180 (WEGIGVVSYLLINFWFTRIQA), 198–218 (LSIAYFVMLPAFGSADFSTVF), 222–242 (AYINQTTITIIGFLLLVGAMA), 261–281 (TPVSALIHAATLVTAGSYLLI), 293–313 (VLLVITIIGASTAFFAATCGL), 321–341 (IIAFSTISQLGYMVMAIGLSQ), 350–370 (LFHAYFKALLFLGAGSVIHAF), 382–402 (LINFLPFTYAVMLVGTLSLLA), 432–452 (ILGSVTAGLTAFYSFRLISLV), 472–492 (ITVIIPLAVLAIFSIFFGYVT), 526–546 (LIFKLLPTIFSLAGTLFALYL), 635–655 (ALYITLGLLSLLFIVFAPMLV), and 665–685 (LIILFIFTLIVNSAYLNKKLS).

It belongs to the complex I subunit 5 family.

The protein resides in the mitochondrion inner membrane. The enzyme catalyses a ubiquinone + NADH + 5 H(+)(in) = a ubiquinol + NAD(+) + 4 H(+)(out). Its function is as follows. Core subunit of the mitochondrial membrane respiratory chain NADH dehydrogenase (Complex I) that is believed to belong to the minimal assembly required for catalysis. Complex I functions in the transfer of electrons from NADH to the respiratory chain. The immediate electron acceptor for the enzyme is believed to be ubiquinone. The polypeptide is NADH-ubiquinone oxidoreductase chain 5 (ND5) (Schizophyllum commune (Split gill fungus)).